The primary structure comprises 495 residues: Methyl viologen resistance protein SmvA (495 aa).

A run of 14 helical transmembrane segments spans residues 5–25 (WLTLVIIVLVYIPVAIDATVL), 44–64 (LWIIDIYSLVMAGMVLPMGAL), 73–93 (LLMLGGTLFGLASLAAAFSHT), 96–116 (WLIATRVLLAIGAAMIVPATL), 135–155 (VWAAVGSGGAAFGPLIGGILL), 158–178 (FYWGSVFLINVPIVLVVMGLT), 192–212 (PLNLGHAVMLIIAILLLVYSA), 220–240 (LSLWVISFTLLTGALLLGLFI), 260–280 (IILSGVVMAMTAMITLVGFEL), 299–319 (VFMLPVMVASGFSGPIAGVLV), 327–347 (VATGGMALSALSFYGLAMTDF), 357–377 (LMALLGFSAASALLASTSAIM), 391–411 (IETMAYELGAGLGIAIFGLLL), and 469–489 (VALSSAGSMLLLLAVGMWFSL).

Belongs to the major facilitator superfamily. TCR/Tet family.

It is found in the cell inner membrane. In terms of biological role, major efflux pump for acriflavine and other quaternary ammonium compounds (QACs). Also required for resistance to methyl viologen. In Salmonella typhimurium (strain LT2 / SGSC1412 / ATCC 700720), this protein is Methyl viologen resistance protein SmvA (smvA).